Consider the following 1149-residue polypeptide: Transforming acidic coiled-coil-containing protein 2 (1149 aa).

Disordered regions lie at residues 1–73, 91–227, and 247–430; these read MGNE…GSNQ, SASP…ASSG, and PCSA…VPLT. Residues 13-35 show a composition bias toward polar residues; the sequence is TSSVQSPRSLQPPGKSQSLQKQQ. Residues 91 to 106 are compositionally biased toward low complexity; the sequence is SASPSAARASPAPLAP. Ser-100 bears the Phosphoserine mark. Positions 155–180 are enriched in pro residues; sequence KAPPAPPPPPPEVTPEPEVIDPPAPE. Ser-265 carries the phosphoserine modification. Polar residues-rich tracts occupy residues 267 to 284 and 300 to 317; these read ESVPPSKSTLSRSLSLQA and TLTTDACGTGSNSASSTL. A compositionally biased stretch (basic residues) spans 318–334; sequence KRTKKTRPPSLKKKQAT. At Ser-354 the chain carries Phosphoserine. Residues 358–368 show a composition bias toward basic and acidic residues; it reads SEEHLAPETKT. Ser-419 carries the post-translational modification Phosphoserine. The residue at position 439 (Thr-439) is a Phosphothreonine. The tract at residues 463-617 is disordered; the sequence is SEDKGSWESQ…PAKKKKTPLK (155 aa). Residues 481–498 are compositionally biased toward basic residues; it reads KIGKKPVAKMPLRRPKMK. Residues 508-596 form the SPAZ domain; the sequence is PASPPRSPTE…SPASFEIPAS (89 aa). Ser-510 and Ser-514 each carry phosphoserine. The residue at position 516 (Thr-516) is a Phosphothreonine. The span at 541-561 shows a compositional bias: polar residues; the sequence is NPFSSTSKMQESPKLSQQSYN. Ser-552, Ser-582, Ser-585, Ser-587, and Ser-596 each carry phosphoserine. The segment covering 575-590 has biased composition (low complexity); the sequence is KASSKTPSSPSKSPAS. A phosphothreonine mark is found at Thr-632, Thr-653, and Thr-657. Disordered regions lie at residues 636–665 and 696–719; these read KKSPKRSPLSDPPSQDPTPAATPEAPSAIS and DFPQPSDLSNFVNETKFNSPSEEL. Positions 652–665 are enriched in low complexity; sequence PTPAATPEAPSAIS. Residues 701–716 show a composition bias toward polar residues; that stretch reads SDLSNFVNETKFNSPS. Residues Ser-714 and Ser-736 each carry the phosphoserine modification. Residue Thr-755 is modified to Phosphothreonine. Positions 756 to 780 are disordered; it reads PQESPVKSPPVRMSDSPTPCSGSSF. Ser-759 and Ser-771 each carry phosphoserine. Positions 770-780 are enriched in polar residues; sequence DSPTPCSGSSF. Coiled coils occupy residues 877–905 and 948–1148; these read AQKLQEELEFAVMRIEALKLARQIALASR and DLDS…KMGK.

Belongs to the TACC family. Interacts with microtubules. Interacts with YEATS4, GCN5L2 and PCAF. Interacts with CCDC100/CEP120. In terms of processing, phosphorylated; which is required for localization in centrosome. In terms of tissue distribution, expressed in brain, kidney, lung, thymus and ovary. Not detectable in normal tissues at protein level.

It is found in the cytoplasm. The protein resides in the nucleus. The protein localises to the cytoskeleton. It localises to the microtubule organizing center. Its subcellular location is the centrosome. Its function is as follows. Plays a role in the microtubule-dependent coupling of the nucleus and the centrosome. Involved in the processes that regulate centrosome-mediated interkinetic nuclear migration (INM) of neural progenitors. May play a role in organizing centrosomal microtubules. The sequence is that of Transforming acidic coiled-coil-containing protein 2 (Tacc2) from Mus musculus (Mouse).